The sequence spans 432 residues: Tol-Pal system protein TolB (432 aa).

The first 29 residues, 1 to 29 (MMRNVWKSGLRRSAWIGLLMVLCVGVARA), serve as a signal peptide directing secretion.

The protein belongs to the TolB family. As to quaternary structure, the Tol-Pal system is composed of five core proteins: the inner membrane proteins TolA, TolQ and TolR, the periplasmic protein TolB and the outer membrane protein Pal. They form a network linking the inner and outer membranes and the peptidoglycan layer.

Its subcellular location is the periplasm. Part of the Tol-Pal system, which plays a role in outer membrane invagination during cell division and is important for maintaining outer membrane integrity. The sequence is that of Tol-Pal system protein TolB from Ralstonia nicotianae (strain ATCC BAA-1114 / GMI1000) (Ralstonia solanacearum).